The sequence spans 218 residues: Thiopurine S-methyltransferase (218 aa).

The S-adenosyl-L-methionine site is built by Trp-10, Leu-45, Glu-66, and Arg-123.

This sequence belongs to the class I-like SAM-binding methyltransferase superfamily. TPMT family.

Its subcellular location is the cytoplasm. The enzyme catalyses S-adenosyl-L-methionine + a thiopurine = S-adenosyl-L-homocysteine + a thiopurine S-methylether.. The sequence is that of Thiopurine S-methyltransferase from Xanthomonas axonopodis pv. citri (strain 306).